A 301-amino-acid polypeptide reads, in one-letter code: Chitin deacetylase 1 (301 aa).

A signal peptide spans 1–24 (MKIFNTIQSVLFAAFFLKQGNCLA). Residues asparagine 26, asparagine 50, and asparagine 68 are each glycosylated (N-linked (GlcNAc...) asparagine). Residues cysteine 107 and cysteine 290 are joined by a disulfide bond. The NodB homology domain occupies 108–288 (FKLSQTFDDG…LIGSDQLTIA (181 aa)). Aspartate 115 acts as the Proton acceptor in catalysis. Aspartate 115 contacts acetate. Aspartate 116, histidine 162, and histidine 166 together coordinate Co(2+). N-linked (GlcNAc...) asparagine glycosylation is present at asparagine 189. Tyrosine 203 contacts acetate. Residue histidine 263 is the Proton donor of the active site.

Belongs to the polysaccharide deacetylase family. Co(2+) serves as cofactor.

Its subcellular location is the prospore. It catalyses the reaction [(1-&gt;4)-N-acetyl-beta-D-glucosaminyl](n) + n H2O = chitosan + n acetate. Its function is as follows. Hydrolyzes the N-acetamido groups of N-acetyl-D-glucosamine residues in chitin to form chitosan and acetate. Chitosan is a component of the spore wall. The polypeptide is Chitin deacetylase 1 (Saccharomyces cerevisiae (strain ATCC 204508 / S288c) (Baker's yeast)).